A 534-amino-acid chain; its full sequence is MTTPTNFTTEIDKLHAEITRLETGFYENVNSFFLCSMALIIFFMQCGFAYLEAGAVRSKNTTNILIKNLLDSCICIIGYWAIGWALAYGDSGEGVNLFVGHSQFFLSGFSDYPRFFFQYVFSATAATIVSGAVAERCEFITYVTYCTVISTFIYPVLTHWGWTENGWMAKGITSGIIDTKYDDFAGSGLVHLCGGSISFLAAWIMGPRIGKFPDDEDDESDEILGHSVPFTALGGFILMFGFLAFNGGSVASISHAGDGHTVALAMINTILSGAFAALIYLGVHYYQHGKWTLLLTINACLSGMVAACAGCNKMEPWACIWVGLGAGLIYLAFSKLMIRLKIDDPLDAFAVHAGGGFWGLMSSSIISHGGVAYALADAVSGAKNSGDHLTQAFAQLGWQMICALAIIAWSLGVMLPIFWILKKTGKLRVSEEVEINGLDVFKHGEMAYPLRAYGHGWHDFERANKIQAFSAKITVGEGKNTRIMKIHPEMSIEQLASVYDRSGNIIPMPKKSRTLFTNSAERKMSQMMYDENKM.

The next 11 helical transmembrane spans lie at 31-51 (SFFLCSMALIIFFMQCGFAYL), 69-89 (LLDSCICIIGYWAIGWALAYG), 115-135 (FFFQYVFSATAATIVSGAVAE), 139-159 (FITYVTYCTVISTFIYPVLTH), 184-204 (FAGSGLVHLCGGSISFLAAWI), 223-243 (ILGHSVPFTALGGFILMFGFL), 263-283 (ALAMINTILSGAFAALIYLGV), 291-311 (WTLLLTINACLSGMVAACAGC), 318-338 (ACIWVGLGAGLIYLAFSKLMI), 346-366 (LDAFAVHAGGGFWGLMSSSII), and 401-421 (ICALAIIAWSLGVMLPIFWIL).

Belongs to the ammonia transporter channel (TC 1.A.11.2) family.

Its subcellular location is the membrane. Involved in the uptake of ammonia. The sequence is that of Putative ammonium transporter 1 (amt-1) from Caenorhabditis elegans.